The sequence spans 86 residues: Mu-theraphotoxin-Hhn1c (86 aa).

An N-terminal signal peptide occupies residues 1-21; it reads MKASMFLALAGLALLFVVCYA. Positions 22 to 49 are excised as a propeptide; the sequence is SESEEKEFSNELLSSVLAVDDNSKGEER. 3 cysteine pairs are disulfide-bonded: cysteine 51–cysteine 66, cysteine 58–cysteine 73, and cysteine 65–cysteine 80. Isoleucine 84 carries the isoleucine amide modification.

This sequence belongs to the neurotoxin 10 (Hwtx-1) family. 22 (Htx-4) subfamily. As to quaternary structure, monomer. Expressed by the venom gland.

The protein localises to the secreted. Functionally, neurotoxin. Selectively blocks neuronal tetrodotoxin-sensitive voltage-gated sodium channels (Nav). Does not affect tetrodotoxin-resistant voltage-gated sodium channels or calcium channels. The chain is Mu-theraphotoxin-Hhn1c from Cyriopagopus hainanus (Chinese bird spider).